We begin with the raw amino-acid sequence, 512 residues long: Ribose import ATP-binding protein RbsA 1 (512 aa).

2 consecutive ABC transporter domains span residues 8–244 (FRME…IGRE) and 254–502 (AHRG…LNIA). 40–47 (GENGAGKS) contacts ATP.

Belongs to the ABC transporter superfamily. Ribose importer (TC 3.A.1.2.1) family. In terms of assembly, the complex is composed of an ATP-binding protein (RbsA), two transmembrane proteins (RbsC) and a solute-binding protein (RbsB).

It is found in the cell inner membrane. The enzyme catalyses D-ribose(out) + ATP + H2O = D-ribose(in) + ADP + phosphate + H(+). Functionally, part of the ABC transporter complex RbsABC involved in ribose import. Responsible for energy coupling to the transport system. The protein is Ribose import ATP-binding protein RbsA 1 of Rhizobium johnstonii (strain DSM 114642 / LMG 32736 / 3841) (Rhizobium leguminosarum bv. viciae).